A 413-amino-acid polypeptide reads, in one-letter code: Tryptophan synthase beta chain (413 aa).

N6-(pyridoxal phosphate)lysine is present on K106.

It belongs to the TrpB family. As to quaternary structure, tetramer of two alpha and two beta chains. Requires pyridoxal 5'-phosphate as cofactor.

It catalyses the reaction (1S,2R)-1-C-(indol-3-yl)glycerol 3-phosphate + L-serine = D-glyceraldehyde 3-phosphate + L-tryptophan + H2O. The protein operates within amino-acid biosynthesis; L-tryptophan biosynthesis; L-tryptophan from chorismate: step 5/5. Its function is as follows. The beta subunit is responsible for the synthesis of L-tryptophan from indole and L-serine. The polypeptide is Tryptophan synthase beta chain (Methylobacterium radiotolerans (strain ATCC 27329 / DSM 1819 / JCM 2831 / NBRC 15690 / NCIMB 10815 / 0-1)).